Reading from the N-terminus, the 464-residue chain is Protein FAM90A10 (464 aa).

Disordered stretches follow at residues methionine 1–leucine 42, valine 69–alanine 373, and histidine 415–proline 437. 2 stretches are compositionally biased toward basic and acidic residues: residues glycine 74 to glycine 89 and asparagine 97 to arginine 114. A compositionally biased stretch (low complexity) spans leucine 180–leucine 197.

This sequence belongs to the FAM90 family.

This is Protein FAM90A10 (FAM90A10) from Homo sapiens (Human).